The primary structure comprises 138 residues: Ribosome-binding factor A (138 aa).

It belongs to the RbfA family. Monomer. Binds 30S ribosomal subunits, but not 50S ribosomal subunits or 70S ribosomes.

It is found in the cytoplasm. Its function is as follows. One of several proteins that assist in the late maturation steps of the functional core of the 30S ribosomal subunit. Associates with free 30S ribosomal subunits (but not with 30S subunits that are part of 70S ribosomes or polysomes). Required for efficient processing of 16S rRNA. May interact with the 5'-terminal helix region of 16S rRNA. This Bradyrhizobium sp. (strain ORS 278) protein is Ribosome-binding factor A.